We begin with the raw amino-acid sequence, 209 residues long: Uracil phosphoribosyltransferase (209 aa).

5-phospho-alpha-D-ribose 1-diphosphate contacts are provided by residues Arg79, Arg104, and 131 to 139; that span reads DPMLATGHT. Residues Ile194 and 199 to 201 each bind uracil; that span reads GDA. Asp200 serves as a coordination point for 5-phospho-alpha-D-ribose 1-diphosphate.

Belongs to the UPRTase family. Mg(2+) is required as a cofactor.

It carries out the reaction UMP + diphosphate = 5-phospho-alpha-D-ribose 1-diphosphate + uracil. The protein operates within pyrimidine metabolism; UMP biosynthesis via salvage pathway; UMP from uracil: step 1/1. Allosterically activated by GTP. Catalyzes the conversion of uracil and 5-phospho-alpha-D-ribose 1-diphosphate (PRPP) to UMP and diphosphate. The sequence is that of Uracil phosphoribosyltransferase from Caulobacter sp. (strain K31).